The following is a 173-amino-acid chain: NADH-ubiquinone oxidoreductase chain 6 (173 aa).

Transmembrane regions (helical) follow at residues 1–21 (MTYF…AVAS), 27–47 (YGVV…MSLG), 48–68 (MSFV…VVFV), 87–107 (VVGY…VGGL), and 139–159 (CGVG…FVVL).

This sequence belongs to the complex I subunit 6 family.

The protein resides in the mitochondrion membrane. It catalyses the reaction a ubiquinone + NADH + 5 H(+)(in) = a ubiquinol + NAD(+) + 4 H(+)(out). In terms of biological role, core subunit of the mitochondrial membrane respiratory chain NADH dehydrogenase (Complex I) that is believed to belong to the minimal assembly required for catalysis. Complex I functions in the transfer of electrons from NADH to the respiratory chain. The immediate electron acceptor for the enzyme is believed to be ubiquinone. The chain is NADH-ubiquinone oxidoreductase chain 6 (MT-ND6) from Synthliboramphus antiquus (Ancient murrelet).